We begin with the raw amino-acid sequence, 304 residues long: Beta-lactamase-like protein str6 (304 aa).

This sequence belongs to the beta-lactamase family.

The protein operates within mycotoxin biosynthesis. Its function is as follows. Beta-lactamase-like protein; part of the gene cluster that mediates the biosynthesis of strobilurin A, an antifungal polyketide that contains a key beta-methoxyacrylate toxophore that targets the complex III of the mitochondrial electron transport chain. Strobilurin biosynthesis begins with construction of benzoyl CoA by step-wise elimination of ammonia from phenylalanine by the phenylalanine ammonia-lyase str11, oxygenation by str8 and retro-Claisen reaction to form benzoic acid, which is activated to its CoA thiolester benzoyl CoA by the dedicated CoA ligase str10. Benzoyl CoA forms the starter unit for the highly reducing polyketide synthase stpks1 that produces the polyketide prestrobilutin A. The FAD-dependent oxygenase str9 then catalyzes the key oxidative rearrangement responsible for the creation of the beta-methoxyacrylate toxophore. Str9 performs epoxidation of the 2,3 olefin of prestrobilutin A, followed by Meinwald rearrangement to furnish the aldehyde intermediate. Rapid enolization of the aldehyde intermediate would give the beta-methoxyacrylate skeleton and methylations catalyzed by str2 and str3 complete the synthesis and lead to the production of strobilurin A. The short-chain dehydrogenase stl2 and the dehydrogenase str4 play a role in the shunt pathway leading to the production of bolineol. The cluster encodes no obvious halogenase gene that could be involved in production of strobilurin B, nor any obvious dimethylallyl-transferase that could be involved in the production of strobilurin G. It is possible that unknown proteins encoded in, or near, the cluster (such as str1 or stl1) may form new classes of halogenases or dimethylally-transferases, or that the responsible genes are located elsewhere on the genome. Similarly, proteins encoded by str5/str6 hydrolases appear to have no chemical role in the biosynthesis of strobilurin A. Finally, no obvious self-resistance gene is found within the cluster. This chain is Beta-lactamase-like protein str6, found in Strobilurus tenacellus.